A 149-amino-acid chain; its full sequence is Transcriptional repressor NrdR (149 aa).

The segment at 3–34 is a zinc-finger region; that stretch reads CPFCAMEETKVIDSRLVSDGYQVRRRRECGYC. The 91-residue stretch at 49–139 folds into the ATP-cone domain; that stretch reads PKIIKNDGSR…VYLSFDDINQ (91 aa).

This sequence belongs to the NrdR family. The cofactor is Zn(2+).

Negatively regulates transcription of bacterial ribonucleotide reductase nrd genes and operons by binding to NrdR-boxes. In Histophilus somni (strain 129Pt) (Haemophilus somnus), this protein is Transcriptional repressor NrdR.